We begin with the raw amino-acid sequence, 335 residues long: 1D-myo-inositol 2-acetamido-2-deoxy-alpha-D-glucopyranoside deacetylase (335 aa).

3 residues coordinate Zn(2+): histidine 19, aspartate 22, and histidine 158.

Belongs to the MshB deacetylase family. Zn(2+) serves as cofactor.

The catalysed reaction is 1D-myo-inositol 2-acetamido-2-deoxy-alpha-D-glucopyranoside + H2O = 1D-myo-inositol 2-amino-2-deoxy-alpha-D-glucopyranoside + acetate. Functionally, catalyzes the deacetylation of 1D-myo-inositol 2-acetamido-2-deoxy-alpha-D-glucopyranoside (GlcNAc-Ins) in the mycothiol biosynthesis pathway. This is 1D-myo-inositol 2-acetamido-2-deoxy-alpha-D-glucopyranoside deacetylase from Corynebacterium urealyticum (strain ATCC 43042 / DSM 7109).